We begin with the raw amino-acid sequence, 214 residues long: Adenylate kinase (214 aa).

Gly10–Thr15 contributes to the ATP binding site. The NMP stretch occupies residues Ser30–Val59. AMP-binding positions include Thr31, Arg36, Gly57–Val59, Gly85–Arg88, and Gln92. The tract at residues Gly126–Asp163 is LID. ATP is bound at residue Arg127. Residues Cys130 and Cys133 each coordinate Zn(2+). Val136–Tyr137 is a binding site for ATP. Zn(2+)-binding residues include Cys150 and Asp153. Positions 160 and 171 each coordinate AMP. ATP is bound at residue Gly199.

This sequence belongs to the adenylate kinase family. Monomer.

It localises to the cytoplasm. It catalyses the reaction AMP + ATP = 2 ADP. It participates in purine metabolism; AMP biosynthesis via salvage pathway; AMP from ADP: step 1/1. Catalyzes the reversible transfer of the terminal phosphate group between ATP and AMP. Plays an important role in cellular energy homeostasis and in adenine nucleotide metabolism. The sequence is that of Adenylate kinase from Anaeromyxobacter dehalogenans (strain 2CP-1 / ATCC BAA-258).